The chain runs to 341 residues: DNA-directed RNA polymerase subunit alpha (341 aa).

Residues 1 to 233 (MVREEVPVST…DLFIPFLHAE (233 aa)) form an alpha N-terminal domain (alpha-NTD) region. The interval 266–341 (IILKRIFIDQ…LKNSNQFESR (76 aa)) is alpha C-terminal domain (alpha-CTD).

This sequence belongs to the RNA polymerase alpha chain family. In terms of assembly, in plastids the minimal PEP RNA polymerase catalytic core is composed of four subunits: alpha, beta, beta', and beta''. When a (nuclear-encoded) sigma factor is associated with the core the holoenzyme is formed, which can initiate transcription.

It localises to the plastid. Its subcellular location is the chloroplast. It carries out the reaction RNA(n) + a ribonucleoside 5'-triphosphate = RNA(n+1) + diphosphate. Its function is as follows. DNA-dependent RNA polymerase catalyzes the transcription of DNA into RNA using the four ribonucleoside triphosphates as substrates. The sequence is that of DNA-directed RNA polymerase subunit alpha from Nymphaea alba (White water-lily).